The chain runs to 153 residues: Natriuretic peptides A (153 aa).

Residues 1–25 (MGPFSTITVSFLFCLAFWHPDQIGA) form the signal peptide. 2 propeptides span residues 26-123 (NPVY…TAPR) and 93-103 (DGEALGRSTWE). A disordered region spans residues 54-101 (EDEAVPPQALSEQSDEAGAALSPLPEVPPWTGEVSPAQRDGEALGRST). The residue at position 129 (serine 129) is a Phosphoserine. A disulfide bond links cysteine 130 and cysteine 146. The segment at 147-151 (NSFRY) is important for degradation of atrial natriuretic peptide by IDE.

Belongs to the natriuretic peptide family. In terms of assembly, homodimer; disulfide-linked antiparallel dimer. In terms of processing, the precursor molecule is proteolytically cleaved by CORIN at Arg-123 to produce the atrial natriuretic peptide. Undergoes further proteolytic cleavage by unknown proteases to give rise to long-acting natriuretic peptide, vessel dilator and kaliuretic peptide. Additional processing gives rise to the auriculin and atriopeptin peptides. In the kidneys, alternative processing by an unknown protease results in the peptide urodilatin. Post-translationally, cleavage by MME initiates degradation of the factor and thereby regulates its activity. Degradation by IDE results in reduced activation of NPR1 (in vitro). During IDE degradation, the resulting products can temporarily stimulate NPR2 to produce cGMP, before the fragments are completely degraded and inactivated by IDE (in vitro). Degraded by IDE. In terms of processing, phosphorylation on Ser-129 decreases vasorelaxant activity.

It localises to the secreted. The protein localises to the perikaryon. It is found in the cell projection. Its function is as follows. Hormone that plays a key role in mediating cardio-renal homeostasis, and is involved in vascular remodeling and regulating energy metabolism. Acts by specifically binding and stimulating NPR1 to produce cGMP, which in turn activates effector proteins, such as PRKG1, that drive various biological responses. Regulates vasodilation, natriuresis, diuresis and aldosterone synthesis and is therefore essential for regulating blood pressure, controlling the extracellular fluid volume and maintaining the fluid-electrolyte balance. Also involved in inhibiting cardiac remodeling and cardiac hypertrophy by inducing cardiomyocyte apoptosis and attenuating the growth of cardiomyocytes and fibroblasts. Plays a role in female pregnancy by promoting trophoblast invasion and spiral artery remodeling in uterus, and thus prevents pregnancy-induced hypertension. In adipose tissue, acts in various cGMP- and PKG-dependent pathways to regulate lipid metabolism and energy homeostasis. This includes up-regulating lipid metabolism and mitochondrial oxygen utilization by activating the AMP-activated protein kinase (AMPK), and increasing energy expenditure by acting via MAPK11 to promote the UCP1-dependent thermogenesis of brown adipose tissue. Binds the clearance receptor NPR3 which removes the hormone from circulation. May have a role in cardio-renal homeostasis through regulation of natriuresis, diuresis, vasodilation, and inhibiting aldosterone synthesis. In vitro, promotes the production of cGMP and induces vasodilation. May promote natriuresis, at least in part, by enhancing prostaglandin E2 synthesis resulting in the inhibition of renal Na+-K+-ATPase. However reports on the involvement of this peptide in mammal blood volume and blood pressure homeostasis are conflicting; according to a report, in vivo it is not sufficient to activate cGMP and does not inhibit collecting duct transport nor effect diuresis and natriuresis. Appears to bind to specific receptors that are distinct from the receptors bound by atrial natriuretic peptide and vessel dilator. Possibly enhances protein excretion in urine by decreasing proximal tubular protein reabsorption. Functionally, may have a role in cardio-renal homeostasis through regulation of natriuresis, diuresis, and vasodilation. In vitro, promotes the production of cGMP and induces vasodilation. May promote natriuresis, at least in part, by enhancing prostaglandin E2 synthesis resulting in the inhibition of renal Na+-K+-ATPase. However reports on the involvement of this peptide in mammal blood volume and blood pressure homeostasis are conflicting; according to a report it is not sufficient to activate cGMP and does not inhibit collecting duct transport nor effect diuresis and natriuresis. Appears to bind to specific receptors that are distinct from the receptors bound by the atrial natriuretic and long-acting natriuretic peptides. Possibly functions in protein excretion in urine by maintaining the integrity of the proximal tubules and enhancing protein excretion by decreasing proximal tubular protein reabsorption. In terms of biological role, may have a role in cardio-renal homeostasis through regulation of diuresis and inhibiting aldosterone synthesis. In vitro, promotes the production of cGMP and induces vasodilation. May promote natriuresis, at least in part, by enhancing prostaglandin E2 synthesis resulting in the inhibition of renal Na+-K+-ATPase. May have a role in potassium excretion but not sodium excretion (natriuresis). Possibly enhances protein excretion in urine by decreasing proximal tubular protein reabsorption. Its function is as follows. Hormone produced in the kidneys that appears to be important for maintaining cardio-renal homeostasis. Mediates vasodilation, natriuresis and diuresis primarily in the renal system, in order to maintain the extracellular fluid volume and control the fluid-electrolyte balance. Specifically binds and stimulates cGMP production by renal transmembrane receptors, likely NPR1. Urodilatin not ANP, may be the natriuretic peptide responsible for the regulation of sodium and water homeostasis in the kidney. May have a role in cardio-renal homeostasis through regulation of natriuresis and vasodilation. In vivo promotes natriuresis and in vitro, vasodilates renal artery strips. Functionally, may have a role in cardio-renal homeostasis through regulation of regulation of natriuresis and vasodilation. In vivo promotes natriuresis. In vitro, vasodilates intestinal smooth muscle but not smooth muscle strips. In terms of biological role, may have a role in cardio-renal homeostasis through regulation of natriuresis and vasodilation. In vivo promotes natriuresis. In vitro, selectively vasodilates intestinal and vascular smooth muscle strips. Its function is as follows. May have a role in cardio-renal homeostasis through regulation of natriuresis and vasodilation. In vivo promotes natriuresis. In vitro, selectively vasodilates intestinal smooth muscle but not vascular smooth muscle strips. The protein is Natriuretic peptides A (NPPA) of Oryctolagus cuniculus (Rabbit).